A 317-amino-acid chain; its full sequence is Putative HTH-type transcriptional regulatory protein Mlab_0160 (317 aa).

An HTH cro/C1-type domain is found at 132–189 (LRTLREEQAMSLGDLAHALGVSRRTISKYEGGMGTTLEMAMRLEEFFNDDIVMPIDLL). A DNA-binding region (H-T-H motif) is located at residues 143–162 (LGDLAHALGVSRRTISKYEG). A disordered region spans residues 199–219 (VPASLASGHNPESDAQPKRPE). Basic and acidic residues predominate over residues 209–219 (PESDAQPKRPE).

The sequence is that of Putative HTH-type transcriptional regulatory protein Mlab_0160 from Methanocorpusculum labreanum (strain ATCC 43576 / DSM 4855 / Z).